Reading from the N-terminus, the 392-residue chain is Alkaline phosphatase L (392 aa).

A signal peptide spans 1–23; it reads MYKRSLIAASLSVAALVSAQAMA.

It belongs to the PstS family. In terms of assembly, homodimer.

The protein localises to the secreted. It localises to the periplasm. The catalysed reaction is a phosphate monoester + H2O = an alcohol + phosphate. Has both a phosphomonoesterase and phosphodiesterase activity. The protein is Alkaline phosphatase L of Pseudomonas aeruginosa (strain UCBPP-PA14).